Reading from the N-terminus, the 889-residue chain is Alanine--tRNA ligase (889 aa).

Zn(2+)-binding residues include H564, H568, C677, and H681.

This sequence belongs to the class-II aminoacyl-tRNA synthetase family. It depends on Zn(2+) as a cofactor.

It localises to the cytoplasm. It catalyses the reaction tRNA(Ala) + L-alanine + ATP = L-alanyl-tRNA(Ala) + AMP + diphosphate. Its function is as follows. Catalyzes the attachment of alanine to tRNA(Ala) in a two-step reaction: alanine is first activated by ATP to form Ala-AMP and then transferred to the acceptor end of tRNA(Ala). Also edits incorrectly charged Ser-tRNA(Ala) and Gly-tRNA(Ala) via its editing domain. The protein is Alanine--tRNA ligase of Rhodopseudomonas palustris (strain ATCC BAA-98 / CGA009).